The chain runs to 355 residues: GTP 3',8-cyclase (355 aa).

One can recognise a Radical SAM core domain in the interval 16–242 (RYGRRATDMR…PDPRARDGAP (227 aa)). Position 25 (arginine 25) interacts with GTP. 2 residues coordinate [4Fe-4S] cluster: cysteine 32 and cysteine 36. Tyrosine 38 contributes to the S-adenosyl-L-methionine binding site. [4Fe-4S] cluster is bound at residue cysteine 39. Arginine 76 provides a ligand contact to GTP. Position 80 (glycine 80) interacts with S-adenosyl-L-methionine. Threonine 107 lines the GTP pocket. Residue serine 131 coordinates S-adenosyl-L-methionine. Residue lysine 168 participates in GTP binding. Residue methionine 202 coordinates S-adenosyl-L-methionine. 2 residues coordinate [4Fe-4S] cluster: cysteine 277 and cysteine 280. 282 to 284 (RTR) lines the GTP pocket. Position 294 (cysteine 294) interacts with [4Fe-4S] cluster.

This sequence belongs to the radical SAM superfamily. MoaA family. As to quaternary structure, monomer. It depends on [4Fe-4S] cluster as a cofactor.

It carries out the reaction GTP + AH2 + S-adenosyl-L-methionine = (8S)-3',8-cyclo-7,8-dihydroguanosine 5'-triphosphate + 5'-deoxyadenosine + L-methionine + A + H(+). Its pathway is cofactor biosynthesis; molybdopterin biosynthesis. Catalyzes, together with MoaC, the conversion of 5'-GTP to cyclic pyranopterin monophosphate (cPMP or molybdopterin precursor Z). Functionally, catalyzes the cyclization of GTP to (8S)-3',8-cyclo-7,8-dihydroguanosine 5'-triphosphate. In Paenarthrobacter nicotinovorans (Arthrobacter nicotinovorans), this protein is GTP 3',8-cyclase.